The sequence spans 259 residues: uncharacterized protein (259 aa).

Positions 158–187 (VELHLKIIEEDMKETTKKNKEKKQNSQSQE) form a coiled coil. Residues 172-181 (TTKKNKEKKQ) are compositionally biased toward basic and acidic residues. Disordered regions lie at residues 172–197 (TTKK…MEVS) and 217–240 (PVKK…QLSK). Composition is skewed to low complexity over residues 182–193 (NSQSQEISNSIE) and 217–226 (PVKKTSSASK).

This is an uncharacterized protein from Acanthamoeba polyphaga mimivirus (APMV).